The chain runs to 627 residues: MELGGPGAPPPPLLPPLLLLLGAGFLPASSPVETRAHAEERLLKTLFSGYNKWSRPVANISDVVLVHFGLSIAQLIDVDEKNQMMTTNVWVKQEWYDYKLRWDPADYENVTSIRIPSELIWRPDIVLYNNADGDFAITHLTKAHLFHDGRVQWTPPAIYKSSCSIDVTFFPFDQQNCTMKFGSWTYDKAKIDLVSMQSHVDQLGLWESGEWVIVDAAGTYNTRKYECCAEVYPDITYAFVIRRLPLFYTINLIVPCLLISCLTVLVFYLPSDCGEKVTLCISVLLSLTVFLLLITEIIPSTSLVIPLIGEYLLFTMVFVTLSIVITVFVLNVHHRSPRTHTMPAWVRRVFLDVVPRLLLMKRPSVVKDNCRRLIESMHKVASAPGFWPEPEGEPGVVSGERSRGPSRSASFRGPRDEPAEPQPACASPSDRVPAPQPSEGDPGSPCPLPDSCRPPPSTRAPGLTEARSLSFQHVSSAAERVEGGVRCRSWSIQGCAPQDEAASVAGGPVTSSPAFPKASAAELLPPDQPSPCRCRCRKEPSPNAVRKACGTRVPARHLPLSPALARAVEGVQYIADHLKAEDTDFSVKEDWKYVAMVIDRIFLWVFVIVCLLGTAGLFLPPWLAGMI.

Residues 1–31 form the signal peptide; that stretch reads MELGGPGAPPPPLLPPLLLLLGAGFLPASSP. At 32–244 the chain is on the extracellular side; the sequence is VETRAHAEER…ITYAFVIRRL (213 aa). An N-linked (GlcNAc...) asparagine glycan is attached at asparagine 59. Valine 78 and glutamate 80 together coordinate Ca(2+). Asparagine 109 and asparagine 176 each carry an N-linked (GlcNAc...) asparagine glycan. Cystine bridges form between cysteine 163-cysteine 177 and cysteine 227-cysteine 228. The chain crosses the membrane as a helical span at residues 245-269; the sequence is PLFYTINLIVPCLLISCLTVLVFYL. The S-palmitoyl cysteine moiety is linked to residue cysteine 273. 2 helical membrane-spanning segments follow: residues 277-295 and 311-332; these read VTLCISVLLSLTVFLLLIT and YLLFTMVFVTLSIVITVFVLNV. Residues 333–600 lie on the Cytoplasmic side of the membrane; sequence HHRSPRTHTM…WKYVAMVIDR (268 aa). The span at 384-399 shows a compositional bias: low complexity; sequence PGFWPEPEGEPGVVSG. The tract at residues 384-463 is disordered; sequence PGFWPEPEGE…PPPSTRAPGL (80 aa). Phosphoserine is present on serine 427. Pro residues predominate over residues 444–458; the sequence is SPCPLPDSCRPPPST. Serine 541 carries the post-translational modification Phosphoserine. A helical membrane pass occupies residues 601-619; the sequence is IFLWVFVIVCLLGTAGLFL.

It belongs to the ligand-gated ion channel (TC 1.A.9) family. Acetylcholine receptor (TC 1.A.9.1) subfamily. Alpha-4/CHRNA4 sub-subfamily. Neuronal AChR is composed of two different types of subunits: alpha and beta. CHRNA4 forms heteropentameric neuronal acetylcholine receptors with CHRNB2 and CHRNB4, as well as CHRNA5 and CHRNB3 as accesory subunits. Found in two major stoichiometric forms, LS (low agonist sensitivity): (CHRNA4)3:(CHRNB2)2 and HS (high agonist sensitivity): (CHRNA4)2:(CHRNB2)3, the two stoichiometric forms differ in their unitary conductance, calcium permeability, ACh sensitivity and potentiation by divalent cation. Cells produce predominantly an (CHRNA4)3:(CHRNB2)2 nAChR. The (CHRNA4)2:(CHRNB2)3 expression is selectively up-regulated by nicotine and has lower single channel conductance and calcium permeability. In the striatum, also forms CHRNA4:CHRNA6:CHRNB2 complexes. Also found in the stoichiometric form: (CHRNA4:CHRNB2)2:CHRNB3. Interacts with RIC3; which is required for proper folding and assembly. Interacts with LYPD6.

It is found in the synaptic cell membrane. The protein resides in the cell membrane. The enzyme catalyses Ca(2+)(in) = Ca(2+)(out). It carries out the reaction K(+)(in) = K(+)(out). It catalyses the reaction Na(+)(in) = Na(+)(out). With respect to regulation, activated by a myriad of ligands such as acetylcholine, cytisine, nicotine, choline and epibatidine. Channel potentiation by calcium is stoichiometry-selective, CHRNA4:CHRNB2 nACh receptor is achieved by calcium association with topographically distinct sites framed by anionic residues within the CHRNA4 subunit and between the CHRNA4 and CHRNB2 subunits. nAChR activity is inhibited by the antagonist alpha-conotoxins BuIA, PnIA, GID and MII, small disulfide-constrained peptides from cone snails. In terms of biological role, component of neuronal acetylcholine receptors (nAChRs) that function as pentameric, ligand-gated cation channels with high calcium permeability among other activities. nAChRs are excitatory neurotrasnmitter receptors formed by a collection of nAChR subunits known to mediate synaptic transmission in the nervous system and the neuromuscular junction. Each nAchR subunit confers differential attributes to channel properties, including activation, deactivation and desensitization kinetics, pH sensitivity, cation permeability, and binding to allosteric modulators. CHRNA4 forms heteropentameric neuronal acetylcholine receptors with CHRNB2 and CHRNB4, as well as CHRNA5 and CHRNB3 as accesory subunits. Is the most abundant nAChR subtype expressed in the central nervous system. Found in two major stoichiometric forms,(CHRNA4)3:(CHRNB2)2 and (CHRNA4)2:(CHRNB2)3, the two stoichiometric forms differ in their unitary conductance, calcium permeability, ACh sensitivity and potentiation by divalent cation. Involved in the modulation of calcium-dependent signaling pathways, influences the release of neurotransmitters, including dopamine, glutamate and GABA. This Mustela putorius furo (European domestic ferret) protein is Neuronal acetylcholine receptor subunit alpha-4 (CHRNA4).